The following is a 293-amino-acid chain: Probable xyloglucan endotransglucosylase/hydrolase protein 5 (293 aa).

A signal peptide spans 1–21 (MGRLSSTLCLTFLILATVAFG). Residues 23-220 (PPKKSINVPF…WEKAPFVASY (198 aa)) form the GH16 domain. Glu106 (nucleophile) is an active-site residue. The active-site Proton donor is the Glu110. Glu110 is a xyloglucan binding site. A glycan (N-linked (GlcNAc...) asparagine) is linked at Asn114. Residues 123–125 (QTN), 133–135 (NRE), 199–200 (DW), and Gly204 contribute to the xyloglucan site. 2 disulfide bridges follow: Cys228/Cys237 and Cys274/Cys287. Arg279 contributes to the xyloglucan binding site.

It belongs to the glycosyl hydrolase 16 family. XTH group 1 subfamily. In terms of processing, contains at least one intrachain disulfide bond essential for its enzymatic activity. In terms of tissue distribution, root specific.

The protein localises to the secreted. It localises to the cell wall. It is found in the extracellular space. The protein resides in the apoplast. The catalysed reaction is breaks a beta-(1-&gt;4) bond in the backbone of a xyloglucan and transfers the xyloglucanyl segment on to O-4 of the non-reducing terminal glucose residue of an acceptor, which can be a xyloglucan or an oligosaccharide of xyloglucan.. Its function is as follows. Catalyzes xyloglucan endohydrolysis (XEH) and/or endotransglycosylation (XET). Cleaves and religates xyloglucan polymers, an essential constituent of the primary cell wall, and thereby participates in cell wall construction of growing tissues. The protein is Probable xyloglucan endotransglucosylase/hydrolase protein 5 (XTH5) of Arabidopsis thaliana (Mouse-ear cress).